The chain runs to 588 residues: Adenine deaminase (588 aa).

This sequence belongs to the metallo-dependent hydrolases superfamily. Adenine deaminase family. In terms of assembly, homodimer. It depends on Mn(2+) as a cofactor.

The enzyme catalyses adenine + H2O + H(+) = hypoxanthine + NH4(+). This Shigella flexneri serotype 5b (strain 8401) protein is Adenine deaminase.